The chain runs to 130 residues: Albumin-1 A (130 aa).

The signal sequence occupies residues 1–26 (MASVKLASLIVLFATLGMFLTKNVGA). 3 cysteine pairs are disulfide-bonded: cysteine 29/cysteine 46, cysteine 33/cysteine 48, and cysteine 41/cysteine 58. 2 consecutive propeptides follow at residues 64–69 (VFLRTN) and 123–130 (LLKSVSTA).

Post-translationally, the C-terminal glycine may be removed from PA1b. Major component of both the cotyledons and embryonic axes of mature seeds.

In terms of biological role, PA1b binds to basic 7S globulin (BG) and stimulates its phosphorylation activity. Involved in the signal transduction system to regulate the growth and differentiation as a hormone peptide. Toxic to various insects through binding to a high affinity binding site in the insect gut. The chain is Albumin-1 A from Pisum sativum (Garden pea).